We begin with the raw amino-acid sequence, 621 residues long: Interleukin-1 receptor-associated kinase-like 2 (621 aa).

A Death domain is found at 13–94 (LDDLCRNMDT…RAAQIILNWK (82 aa)). Residues 113–175 (GKPLAASVRN…TASADSKDFS (63 aa)) form a disordered region. Residues 157 to 169 (ASSSLKTNQTASA) show a composition bias toward polar residues. In terms of domain architecture, Protein kinase spans 206-476 (FNPSHKISEG…AEALVMAACL (271 aa)). ATP-binding positions include 212 to 220 (ISEGTFADV), K233, and 333 to 336 (KSSN). The span at 503–522 (ETSLPCSGLSEGTGSSFNTP) shows a compositional bias: polar residues. The disordered stretch occupies residues 503–534 (ETSLPCSGLSEGTGSSFNTPEETDDVDNSSFD).

This sequence belongs to the protein kinase superfamily. TKL Ser/Thr protein kinase family. Pelle subfamily. In terms of assembly, interacts with MYD88. IL-1 stimulation leads to the formation of a signaling complex which dissociates from the IL-1 receptor following the binding of PELI1.

In terms of biological role, binds to the IL-1 type I receptor following IL-1 engagement, triggering intracellular signaling cascades leading to transcriptional up-regulation and mRNA stabilization. This chain is Interleukin-1 receptor-associated kinase-like 2 (IRAK2), found in Bos taurus (Bovine).